A 374-amino-acid chain; its full sequence is Tryptophan--tRNA ligase (374 aa).

Positions 81-89 (PSGPVHIGH) match the 'HIGH' region motif. The 'KMSKS' region motif lies at 258 to 262 (KMSAS).

This sequence belongs to the class-I aminoacyl-tRNA synthetase family.

It is found in the cytoplasm. The enzyme catalyses tRNA(Trp) + L-tryptophan + ATP = L-tryptophyl-tRNA(Trp) + AMP + diphosphate + H(+). The chain is Tryptophan--tRNA ligase from Pyrobaculum calidifontis (strain DSM 21063 / JCM 11548 / VA1).